The chain runs to 190 residues: PBP1-interacting protein LSM12 (190 aa).

In terms of domain architecture, Sm spans Pro2–Asn69. Positions Pro84–Lys190 constitute an AD domain.

The protein belongs to the LSM12 family. In terms of assembly, forms a complex composed of at least MKT1, PBP1, XAC1 and LSM12. Forms a complex composed of at least MKT1L, PBP1, XAC1 and LSM12. Within the complex, interacts with PBP1; the interaction is direct.

Functionally, involved in post-transcriptional regulation of gene expression. The polypeptide is PBP1-interacting protein LSM12 (Trypanosoma brucei brucei (strain 927/4 GUTat10.1)).